A 552-amino-acid polypeptide reads, in one-letter code: MASAASSKHLFVTGGVASSLGKGLTASSLGRLLKSRGLRVTMQKLDPYLNVDPGTMNPFQHGEVFVTDDGAETDLDIGHYERFLDTELSASANVTTGQIYSSVIAKERQGAYLGDTVQVIPHITNEIKARILAMDSEDVDVVITEIGGTVGDIESQPFLEAARQIRHEIGRDNCFFLHISLLPYLAPAGELKTKPTQHSVAALRSIGIQPDAIVCRADRPIPTSLKQKISLMCDVEEGGVVACPDAPSIYDIPKVLHREGLDAFVVRRLGLAFRDVDWTEWNDVLDRVHNPEHEVTIALVGKYVDLPDAYLSVTEALRAGGFAHRTRVNIRWVASDNCTTPEGAQRELDGVHGVLIPGGFGVRGIEGKVGAIRHARENGIPLLGICLGLQCMVIEYARDVAGLRGANSLEFDDKAEHPVVSTMADQTDVVAGERDMGGTMRLGLYPARLRENTLVRELYGGAEEVSERHRHRYEVSNAYRPVLEEAGLVISGVSPDGSLVEYVELPQDKHPFFLGTQAHPELRSRPTRPHPLFVGFIEAALKYSAGTGIADG.

The interval 1–271 is amidoligase domain; the sequence is MASAASSKHL…DAFVVRRLGL (271 aa). Ser18 is a binding site for CTP. A UTP-binding site is contributed by Ser18. ATP-binding positions include 19–24 and Asp76; that span reads SLGKGL. 2 residues coordinate Mg(2+): Asp76 and Glu145. CTP contacts are provided by residues 152 to 154, 192 to 197, and Lys228; these read DIE and KTKPTQ. UTP contacts are provided by residues 192 to 197 and Lys228; that span reads KTKPTQ. Residues 296 to 546 form the Glutamine amidotransferase type-1 domain; it reads TIALVGKYVD…IEAALKYSAG (251 aa). Position 359 (Gly359) interacts with L-glutamine. Cys386 (nucleophile; for glutamine hydrolysis) is an active-site residue. L-glutamine-binding positions include 387–390, Glu410, and Arg472; that span reads LGLQ. Catalysis depends on residues His519 and Glu521.

It belongs to the CTP synthase family. As to quaternary structure, homotetramer.

It carries out the reaction UTP + L-glutamine + ATP + H2O = CTP + L-glutamate + ADP + phosphate + 2 H(+). The catalysed reaction is L-glutamine + H2O = L-glutamate + NH4(+). It catalyses the reaction UTP + NH4(+) + ATP = CTP + ADP + phosphate + 2 H(+). Its pathway is pyrimidine metabolism; CTP biosynthesis via de novo pathway; CTP from UDP: step 2/2. Its activity is regulated as follows. Allosterically activated by GTP, when glutamine is the substrate; GTP has no effect on the reaction when ammonia is the substrate. The allosteric effector GTP functions by stabilizing the protein conformation that binds the tetrahedral intermediate(s) formed during glutamine hydrolysis. Inhibited by the product CTP, via allosteric rather than competitive inhibition. Catalyzes the ATP-dependent amination of UTP to CTP with either L-glutamine or ammonia as the source of nitrogen. Regulates intracellular CTP levels through interactions with the four ribonucleotide triphosphates. This chain is CTP synthase, found in Thermobifida fusca (strain YX).